Here is a 391-residue protein sequence, read N- to C-terminus: Extracellular metalloproteinase 3 (391 aa).

The propeptide occupies 1-9 (HNVVDYVAS). N-linked (GlcNAc...) asparagine glycosylation is present at Asn173. His192 is a binding site for Zn(2+). The active site involves Glu193. His196 contributes to the Zn(2+) binding site. N-linked (GlcNAc...) asparagine glycosylation is found at Asn243 and Asn385.

This sequence belongs to the peptidase M36 family. It depends on Zn(2+) as a cofactor.

Its subcellular location is the secreted. Functionally, secreted metalloproteinase probably acting as a virulence factor. In Trichophyton soudanense, this protein is Extracellular metalloproteinase 3 (MEP3).